Here is an 842-residue protein sequence, read N- to C-terminus: uncharacterized protein (842 aa).

2 disordered regions span residues methionine 1–glutamate 20 and asparagine 142–serine 209. A uDENN FNIP1/2-type domain is found at threonine 35 to leucine 422. The span at alanine 183 to serine 209 shows a compositional bias: polar residues. Residues alanine 430–glutamate 772 form the cDENN FNIP1/2-type domain. Serine 573 and serine 590 each carry phosphoserine. A dDENN FNIP1/2-type domain is found at tyrosine 777–cysteine 842.

The protein localises to the cytoplasm. This is an uncharacterized protein from Schizosaccharomyces pombe (strain 972 / ATCC 24843) (Fission yeast).